A 436-amino-acid chain; its full sequence is Trigger factor (436 aa).

Residues Asp-163–Pro-248 form the PPIase FKBP-type domain.

The protein belongs to the FKBP-type PPIase family. Tig subfamily.

It localises to the cytoplasm. The enzyme catalyses [protein]-peptidylproline (omega=180) = [protein]-peptidylproline (omega=0). Functionally, involved in protein export. Acts as a chaperone by maintaining the newly synthesized protein in an open conformation. Functions as a peptidyl-prolyl cis-trans isomerase. This Bordetella avium (strain 197N) protein is Trigger factor.